The primary structure comprises 78 residues: MKLIIFTGLALLLIVSLIDVEAQNEGACLPRGSVCTTNHASCCSKLSCDCYRRFEKGVEKGQKCWRIPTGLRYSKEKE.

Residues 1–22 form the signal peptide; it reads MKLIIFTGLALLLIVSLIDVEA. Residues 23-26 constitute a propeptide that is removed on maturation; sequence QNEG.

This sequence belongs to the neurotoxin 19 (CSTX) family. 07 (U7-Lctx) subfamily. Post-translationally, contains 4 disulfide bonds. Expressed by the venom gland.

The protein resides in the secreted. The sequence is that of U7-lycotoxin-Ls1f from Lycosa singoriensis (Wolf spider).